The sequence spans 446 residues: MQNTTVLYVPIGRKTFDIEVAEIYRQKSMEWLKGNCSTVIAPEQIVTSVEELQGFLDSIKGNKIDTVLYQSVTFADGEFMVKILEYFKQPVIVWSVREPSVGGRLRLNSLTGGNSTSNVLRNHQHPFAFVFGNPDEKALQERLLRQINVMRVLKALNELKIGVVGDYPPGFFFSAANEEELKSALGVTLHKMDLQEAFKECVKLPEQEWIGEVERAEKQVIGLNRNDETVTKFAQFSTYIKKHIQSEELDALAMRCWPDFFNDLGAAPCSTLSQFTEDGMVTSCESDIHGSISMFILRELAGGNAPYLGDLVHIDEEKNSVVFWHCGAGAYSLANPSTGATAGVHPNRKIGFAMDFGLKAGEVTIFRVSHTPDGYRLLVMKGNALDVEQPFTGTSVEVELATNASDTLYELMHAGYEPHFALVYGDVTEHLIELGRMLNLETKVYV.

This sequence belongs to the SqvD family.

It catalyses the reaction 6-sulfo-beta-D-quinovose = 6-deoxy-6-sulfo-D-fructose. Functionally, part of the sulfo-TAL (or sulfo-SFT) pathway, a D-sulfoquinovose degradation pathway that produces sulfolactate (SL). Catalyzes the isomerization of sulfoquinovose (SQ) to 6-deoxy-6-sulfo-D-fructose (SF). This Priestia aryabhattai (Bacillus aryabhattai) protein is Sulfoquinovose isomerase.